Reading from the N-terminus, the 61-residue chain is Putative antitoxin VapB13 (61 aa).

This sequence belongs to the UPF0165 family.

In terms of biological role, possibly the antitoxin component of a type II toxin-antitoxin (TA) system. Its cognate toxin is VapC13 (Potential). In Archaeoglobus fulgidus (strain ATCC 49558 / DSM 4304 / JCM 9628 / NBRC 100126 / VC-16), this protein is Putative antitoxin VapB13 (vapB13).